The sequence spans 203 residues: Protein-L-isoaspartate O-methyltransferase (203 aa).

Residue Ser-50 is part of the active site.

Belongs to the methyltransferase superfamily. L-isoaspartyl/D-aspartyl protein methyltransferase family.

It localises to the cytoplasm. It catalyses the reaction [protein]-L-isoaspartate + S-adenosyl-L-methionine = [protein]-L-isoaspartate alpha-methyl ester + S-adenosyl-L-homocysteine. In terms of biological role, catalyzes the methyl esterification of L-isoaspartyl residues in peptides and proteins that result from spontaneous decomposition of normal L-aspartyl and L-asparaginyl residues. It plays a role in the repair and/or degradation of damaged proteins. This Methanococcoides burtonii (strain DSM 6242 / NBRC 107633 / OCM 468 / ACE-M) protein is Protein-L-isoaspartate O-methyltransferase.